The sequence spans 583 residues: Pyruvate kinase isozyme A, chloroplastic (583 aa).

Residues 1-74 constitute a chloroplast transit peptide; it reads MSQSLHFSPN…NSGVLYNNNN (74 aa). The span at 43 to 52 shows a compositional bias: low complexity; sequence KASTSPSSSS. Positions 43–75 are disordered; the sequence is KASTSPSSSSDPQVLVADNGTGNSGVLYNNNNK. A compositionally biased stretch (polar residues) spans 62–75; the sequence is GTGNSGVLYNNNNK. Arginine 134 is a binding site for substrate. Residues asparagine 136, aspartate 168, and threonine 169 each contribute to the K(+) site. 136 to 139 provides a ligand contact to ATP; it reads NMCH. Residue glutamate 333 participates in Mg(2+) binding. 3 residues coordinate substrate: glycine 356, aspartate 357, and serine 389. Residue aspartate 357 participates in Mg(2+) binding.

Belongs to the pyruvate kinase family. Oligomer of alpha and beta subunits. It depends on Mg(2+) as a cofactor. K(+) is required as a cofactor.

The protein localises to the plastid. It localises to the chloroplast. It carries out the reaction pyruvate + ATP = phosphoenolpyruvate + ADP + H(+). It participates in carbohydrate degradation; glycolysis; pyruvate from D-glyceraldehyde 3-phosphate: step 5/5. The chain is Pyruvate kinase isozyme A, chloroplastic from Ricinus communis (Castor bean).